The chain runs to 224 residues: N6-methyladenosine RNA demethylase ALKBH (224 aa).

The Fe2OG dioxygenase domain occupies 93-222; sequence LAQAAIVNFY…RINLNVRQMR (130 aa). Residues His-111, Asp-113, and His-178 each coordinate Fe cation. Arg-213 provides a ligand contact to 2-oxoglutarate.

This sequence belongs to the alkB family. The cofactor is Fe(2+).

The enzyme catalyses an N(6)-methyladenosine in mRNA + 2-oxoglutarate + O2 = an adenosine in mRNA + formaldehyde + succinate + CO2. Its function is as follows. RNA demethylase that regulates the stability of mRNAs through an m(6)A-dependent manner. M6A is a modification present at internal sites of mRNAs and some non-coding RNAs and plays a role in mRNA stability and processing. Demethylate m6A at position A1935 within the 3'UTR of transcription factor ZAP1 and plays an important role in C.parasitica development and virulence. Target mRNAs are primarily associated with amino-acid biosynthesis, 2-oxocarboxylic acid metabolism, and ABC transporters, as well as alpha-amino acid metabolism, small-molecule biosynthesis, and the sulfite reductase complex (NADPH). The polypeptide is N6-methyladenosine RNA demethylase ALKBH (Cryphonectria parasitica (strain ATCC 38755 / EP155)).